Here is a 375-residue protein sequence, read N- to C-terminus: uncharacterized protein (375 aa).

The protein belongs to the mimivirus L17x/L18x family.

This is an uncharacterized protein from Acanthamoeba polyphaga mimivirus (APMV).